The chain runs to 132 residues: Glycine cleavage system H protein (132 aa).

The region spanning 24–106 is the Lipoyl-binding domain; the sequence is IATIGLSAHA…YEEGWFIKVR (83 aa). Lys65 is modified (N6-lipoyllysine).

Belongs to the GcvH family. As to quaternary structure, the glycine cleavage system is composed of four proteins: P, T, L and H. The cofactor is (R)-lipoate.

The glycine cleavage system catalyzes the degradation of glycine. The H protein shuttles the methylamine group of glycine from the P protein to the T protein. The sequence is that of Glycine cleavage system H protein from Picosynechococcus sp. (strain ATCC 27264 / PCC 7002 / PR-6) (Agmenellum quadruplicatum).